Consider the following 127-residue polypeptide: UPF0102 protein Glov_2230 (127 aa).

The protein belongs to the UPF0102 family.

The chain is UPF0102 protein Glov_2230 from Trichlorobacter lovleyi (strain ATCC BAA-1151 / DSM 17278 / SZ) (Geobacter lovleyi).